The chain runs to 379 residues: UDP-N-acetylglucosamine--N-acetylmuramyl-(pentapeptide) pyrophosphoryl-undecaprenol N-acetylglucosamine transferase (379 aa).

Residues 17-19, N128, R169, S197, and Q298 contribute to the UDP-N-acetyl-alpha-D-glucosamine site; that span reads TGG.

The protein belongs to the glycosyltransferase 28 family. MurG subfamily.

The protein resides in the cell inner membrane. It carries out the reaction di-trans,octa-cis-undecaprenyl diphospho-N-acetyl-alpha-D-muramoyl-L-alanyl-D-glutamyl-meso-2,6-diaminopimeloyl-D-alanyl-D-alanine + UDP-N-acetyl-alpha-D-glucosamine = di-trans,octa-cis-undecaprenyl diphospho-[N-acetyl-alpha-D-glucosaminyl-(1-&gt;4)]-N-acetyl-alpha-D-muramoyl-L-alanyl-D-glutamyl-meso-2,6-diaminopimeloyl-D-alanyl-D-alanine + UDP + H(+). The protein operates within cell wall biogenesis; peptidoglycan biosynthesis. Its function is as follows. Cell wall formation. Catalyzes the transfer of a GlcNAc subunit on undecaprenyl-pyrophosphoryl-MurNAc-pentapeptide (lipid intermediate I) to form undecaprenyl-pyrophosphoryl-MurNAc-(pentapeptide)GlcNAc (lipid intermediate II). In Brucella canis (strain ATCC 23365 / NCTC 10854 / RM-666), this protein is UDP-N-acetylglucosamine--N-acetylmuramyl-(pentapeptide) pyrophosphoryl-undecaprenol N-acetylglucosamine transferase.